The sequence spans 483 residues: NADH-quinone oxidoreductase subunit N (483 aa).

The next 14 helical transmembrane spans lie at 8 to 28 (INLA…GLLL), 45 to 65 (IAAG…GATQ), 78 to 98 (FAAF…VVSW), 106 to 126 (LGNG…MFMI), 131 to 151 (FLVL…LAAY), 166 to 186 (FVLG…IYGV), 206 to 226 (MLGI…KIAA), 241 to 261 (PTSV…AALF), 275 to 295 (WGPI…LAGL), 303 to 323 (LLAY…AVGN), 330 to 350 (VLVY…LILV), 373 to 393 (LALL…LAGF), 399 to 419 (IFMA…VLFS), and 452 to 472 (AIVG…GSLM).

This sequence belongs to the complex I subunit 2 family. In terms of assembly, NDH-1 is composed of 14 different subunits. Subunits NuoA, H, J, K, L, M, N constitute the membrane sector of the complex.

It localises to the cell inner membrane. It carries out the reaction a quinone + NADH + 5 H(+)(in) = a quinol + NAD(+) + 4 H(+)(out). Its function is as follows. NDH-1 shuttles electrons from NADH, via FMN and iron-sulfur (Fe-S) centers, to quinones in the respiratory chain. The immediate electron acceptor for the enzyme in this species is believed to be ubiquinone. Couples the redox reaction to proton translocation (for every two electrons transferred, four hydrogen ions are translocated across the cytoplasmic membrane), and thus conserves the redox energy in a proton gradient. This chain is NADH-quinone oxidoreductase subunit N, found in Magnetococcus marinus (strain ATCC BAA-1437 / JCM 17883 / MC-1).